Reading from the N-terminus, the 487-residue chain is Cysteine--tRNA ligase (487 aa).

C30 provides a ligand contact to Zn(2+). The 'HIGH' region signature appears at P32–H42. The Zn(2+) site is built by C226, H251, and E255. The 'KMSKS' region motif lies at K283–S287. K286 is an ATP binding site.

The protein belongs to the class-I aminoacyl-tRNA synthetase family. In terms of assembly, monomer. Zn(2+) serves as cofactor.

Its subcellular location is the cytoplasm. The enzyme catalyses tRNA(Cys) + L-cysteine + ATP = L-cysteinyl-tRNA(Cys) + AMP + diphosphate. In Chlorobaculum tepidum (strain ATCC 49652 / DSM 12025 / NBRC 103806 / TLS) (Chlorobium tepidum), this protein is Cysteine--tRNA ligase (cysS).